The sequence spans 298 residues: Glycine--tRNA ligase alpha subunit (298 aa).

Belongs to the class-II aminoacyl-tRNA synthetase family. As to quaternary structure, tetramer of two alpha and two beta subunits.

It localises to the cytoplasm. It carries out the reaction tRNA(Gly) + glycine + ATP = glycyl-tRNA(Gly) + AMP + diphosphate. The polypeptide is Glycine--tRNA ligase alpha subunit (Helicobacter pylori (strain P12)).